Consider the following 397-residue polypeptide: Multidrug efflux pump subunit AcrA (397 aa).

A signal peptide spans 1–24 (MNKNRGFTPLAVVLMLSGSLALTG). C25 carries N-palmitoyl cysteine lipidation. C25 carries S-diacylglycerol cysteine lipidation. Residues 98 to 172 (PATYQATYDS…AVETARINLA (75 aa)) are a coiled coil. Positions 377–397 (EVTADNNQQAASGAQPEQSKS) are disordered. Over residues 379–397 (TADNNQQAASGAQPEQSKS) the composition is skewed to polar residues.

It belongs to the membrane fusion protein (MFP) (TC 8.A.1) family. In terms of assembly, monomeric in solution. Homotrimeric; interacts independently with AcrB and TolC as well as AcrZ. Part of the AcrA-AcrB-TolC efflux pump.

Its subcellular location is the cell inner membrane. In terms of biological role, acrA-AcrB-AcrZ-TolC is a drug efflux protein complex with broad substrate specificity that uses the proton motive force to export substrates. This subunit may act as an adapter protein that links AcrB and TolC stably together. The polypeptide is Multidrug efflux pump subunit AcrA (acrA) (Escherichia coli O157:H7).